A 354-amino-acid polypeptide reads, in one-letter code: S-adenosylmethionine:tRNA ribosyltransferase-isomerase (354 aa).

It belongs to the QueA family. As to quaternary structure, monomer.

It is found in the cytoplasm. The enzyme catalyses 7-aminomethyl-7-carbaguanosine(34) in tRNA + S-adenosyl-L-methionine = epoxyqueuosine(34) in tRNA + adenine + L-methionine + 2 H(+). Its pathway is tRNA modification; tRNA-queuosine biosynthesis. Its function is as follows. Transfers and isomerizes the ribose moiety from AdoMet to the 7-aminomethyl group of 7-deazaguanine (preQ1-tRNA) to give epoxyqueuosine (oQ-tRNA). This is S-adenosylmethionine:tRNA ribosyltransferase-isomerase from Salmonella dublin (strain CT_02021853).